The following is a 151-amino-acid chain: Alpha-latroinsectotoxin-Lh1a (151 aa).

8 ANK repeats span residues 21 to 37 (TDVTQTLIDITEIDLNA), 41 to 52 (ILIRNTNAVINI), 56 to 80 (VGLTPLHLATLQNNLSVSKGAYLND), 84 to 104 (NGMTPLHYAAMTGNLEMVDFL), 105 to 116 (KWTPLHLAILFK), 117 to 125 (QLVIELLAK), 126 to 146 (TFFDLAIENGRLNIVAFAVEK), and 147 to 151 (YIAAR).

This sequence belongs to the cationic peptide 01 (latrotoxin) family. 02 (alpha-latroinsectotoxin) subfamily. As to quaternary structure, homotetramer in membranes. Expressed by the venom gland.

It is found in the secreted. It localises to the target cell membrane. Functionally, insecticidal presynaptic neurotoxin that induces massive neurotransmitter release at insect (but not vertebrate) neuromuscular junctions. Native toxin forms cation-permeable pores (with high permeability to calcium) in lipid membranes locust muscle membrane and artificial lipid bilayers. May bind to insect neurexin-1 homolog, insect adhesion G protein-coupled receptor L1 homolog, and insect receptor-type tyrosine-protein phosphatase S homolog, and induces neurotransmitter exocytosis both by forming tetrameric pores in membranes and signaling via G protein-coupled receptor. Oligomerization is a process independent of divalent cations. The toxin forms channels with 0.55-0.58 nm entrance diameter and a relatively small conductance in planar phospholipid membranes. This is Alpha-latroinsectotoxin-Lh1a from Latrodectus hasselti (Redback spider).